The chain runs to 290 residues: ADP-ribosylation factor-like protein 13A (290 aa).

Residues 28-35 (GLNNSGKT), 71-75 (DLNGD), and 130-133 (NKQD) contribute to the GTP site. Positions 204-226 (SKNNTGSGERCSSHSFSTRTGMS) are disordered.

This sequence belongs to the small GTPase superfamily. Arf family.

The polypeptide is ADP-ribosylation factor-like protein 13A (ARL13A) (Homo sapiens (Human)).